We begin with the raw amino-acid sequence, 486 residues long: Pentatricopeptide repeat-containing protein At2g01860 (486 aa).

Positions 111–137 (QKPDKPSRVRPLPLPQPHKLRPLGLPT) are disordered. PPR repeat units follow at residues 290-321 (DSSV…LKKR), 327-361 (SQQD…NREP), 362-396 (SVVM…NCLL), 397-431 (DLPA…GFSP), and 432-466 (TYDI…GLRL).

The protein belongs to the PPR family. P subfamily.

The polypeptide is Pentatricopeptide repeat-containing protein At2g01860 (EMB975) (Arabidopsis thaliana (Mouse-ear cress)).